Here is a 426-residue protein sequence, read N- to C-terminus: MTATNELLQDLKARGLIAQCTADEELAEHLSTDCRTLYCGFDPTADSLHIGSLVPLLVLKRFQQAGHKPLALVGGATGLIGDPSFKAAERQLNTSDVVGDWVNKIRAQVSAFVDFNESKNGAEVVNNLDWIGEINVIEFMRDIGKHFSVNSMIQKESVKQRIDREGSGISFTEFSYMLLQSYDFAALNKAKECTLQIGGSDQWGNITGGIDLTRRMNRNKVFGLTLPLVTKSDGTKFGKTESGTIWLDPSKTSPYAFFQFWLGTADADVYDFLRFFTFLSVDEIAAFEESDKSVQGRPAGQGVLAKEVTRLVHGEEGLASSERITAALFSGDLASLTETDLAQLAQDGLPTTELEASEQTIVEVLTQSELAKSNKMAREFIGNGAVSVNGEKVADAEVILKKEDALFGKYSVIKRGKKLFNLYIWK.

Tyr38 serves as a coordination point for L-tyrosine. The 'HIGH' region signature appears at 43–52 (PTADSLHIGS). L-tyrosine contacts are provided by Tyr176 and Gln180. Residues 236 to 240 (KFGKT) carry the 'KMSKS' region motif. Residue Lys239 participates in ATP binding. The 68-residue stretch at 359-426 (QTIVEVLTQS…KKLFNLYIWK (68 aa)) folds into the S4 RNA-binding domain.

It belongs to the class-I aminoacyl-tRNA synthetase family. TyrS type 1 subfamily. As to quaternary structure, homodimer.

The protein resides in the cytoplasm. It catalyses the reaction tRNA(Tyr) + L-tyrosine + ATP = L-tyrosyl-tRNA(Tyr) + AMP + diphosphate + H(+). Catalyzes the attachment of tyrosine to tRNA(Tyr) in a two-step reaction: tyrosine is first activated by ATP to form Tyr-AMP and then transferred to the acceptor end of tRNA(Tyr). The chain is Tyrosine--tRNA ligase from Aliivibrio salmonicida (strain LFI1238) (Vibrio salmonicida (strain LFI1238)).